Here is a 698-residue protein sequence, read N- to C-terminus: Protein SST2 (698 aa).

The segment at 10-203 is fungal-DR; that stretch reads ELSSKNFSRT…GAKPNVWSPT (194 aa). S252 is subject to Phosphoserine. The 86-residue stretch at 273–358 folds into the DEP domain; it reads SNAGIRLFEN…SRSSFFTLSK (86 aa). Residue S408 is modified to Phosphoserine. The RGS domain occupies 420–689; the sequence is KLDYVLTDPG…TQSDVYKDAS (270 aa). S539 bears the Phosphoserine; by MAPK mark. The segment at 545–586 is disordered; the sequence is FPTNLYDPSPASAESAASSISSTEADTLGEPPEVSLKPSKNL. Residues 551-570 show a composition bias toward low complexity; the sequence is DPSPASAESAASSISSTEAD. Residue S587 is modified to Phosphoserine.

Phosphorylated by FUS3 and KSS1.

In terms of biological role, desensitization to alpha-factor pheromone. Is involved in regulating the signaling pathway for responding to mating pheromone. The protein is Protein SST2 (SST2) of Saccharomyces cerevisiae (strain ATCC 204508 / S288c) (Baker's yeast).